The following is a 56-amino-acid chain: Large ribosomal subunit protein bL32 (56 aa).

The segment at 1–56 is disordered; the sequence is MAVPARRTSKAKKNKRRTHKGLTTPGLSRDSETGEYRMSHRISPDGTYKGRTIIEK. Basic residues predominate over residues 7–20; the sequence is RTSKAKKNKRRTHK. Residues 29–38 show a composition bias toward basic and acidic residues; sequence RDSETGEYRM.

This sequence belongs to the bacterial ribosomal protein bL32 family.

The sequence is that of Large ribosomal subunit protein bL32 from Listeria monocytogenes serotype 4a (strain HCC23).